A 491-amino-acid chain; its full sequence is E3 ubiquitin-protein ligase Hakai (491 aa).

Positions 1–61 (MDHTDNELQG…PAKAPPGDEE (61 aa)) are disordered. An RING-type zinc finger spans residues 109–149 (CDKCGLPIKIYGRMIPCKHVFCYDCAILHEKKGDKMCPGCS). Residues 148 to 206 (CSDPVQRIEQCTRGSLFMCSIVQGCKRTYLSQRDLQAHINHRHMRAGKPVTRASLENVH) form an HYB domain region. The C2H2-type zinc-finger motif lies at 164–190 (FMCSIVQGCKRTYLSQRDLQAHINHRH). Ser-201, Ser-285, and Ser-290 each carry phosphoserine. Positions 255–491 (QPHEDIRAPP…DQTRYRPYYQ (237 aa)) are disordered. Composition is skewed to pro residues over residues 342 to 359 (APPPPPPPPISHPMPHPP), 372 to 389 (APPPPMTSAPPPITPPPG), and 399 to 423 (MNHPPPGPPPPQHGGPPVTAPPPHH). Polar residues predominate over residues 427 to 442 (NSLPQFTEDQGTLSPP). The span at 457 to 478 (PRGPPPPPRLQGPPSQTPLPGP) shows a compositional bias: pro residues.

This sequence belongs to the Hakai family. As to quaternary structure, homodimer. Interacts with tyrosine-phosphorylated SRC substrates. Component of the WMM complex, a N6-methyltransferase complex composed of a catalytic subcomplex, named MAC, and of an associated subcomplex, named MACOM. The MAC subcomplex is composed of METTL3 and METTL14. The MACOM subcomplex is composed of WTAP, ZC3H13, CBLL1/HAKAI, VIRMA, and, in some cases of RBM15 (RBM15 or RBM15B). Also a component of a MACOM-like complex, named WTAP complex, composed of WTAP, ZC3H13, CBLL1, VIRMA, RBM15, BCLAF1 and THRAP3. Phosphorylated on tyrosine residues.

The protein localises to the nucleus speckle. It localises to the nucleus. It is found in the nucleoplasm. Its subcellular location is the cytoplasm. It catalyses the reaction S-ubiquitinyl-[E2 ubiquitin-conjugating enzyme]-L-cysteine + [acceptor protein]-L-lysine = [E2 ubiquitin-conjugating enzyme]-L-cysteine + N(6)-ubiquitinyl-[acceptor protein]-L-lysine.. Its pathway is protein modification; protein ubiquitination. Its function is as follows. E3 ubiquitin-protein ligase that mediates ubiquitination of several tyrosine-phosphorylated Src substrates, including CDH1, CTTN and DOK1. Targets CDH1 for endocytosis and degradation. Associated component of the WMM complex, a complex that mediates N6-methyladenosine (m6A) methylation of RNAs, a modification that plays a role in the efficiency of mRNA splicing and RNA processing. Its function in the WMM complex is unknown. This is E3 ubiquitin-protein ligase Hakai from Homo sapiens (Human).